We begin with the raw amino-acid sequence, 93 residues long: UPF0358 protein RBAM_014700 (93 aa).

The protein belongs to the UPF0358 family.

This Bacillus velezensis (strain DSM 23117 / BGSC 10A6 / LMG 26770 / FZB42) (Bacillus amyloliquefaciens subsp. plantarum) protein is UPF0358 protein RBAM_014700.